The chain runs to 810 residues: Volume-regulated anion channel subunit LRRC8A (810 aa).

Met-1 is modified (N-acetylmethionine). Topologically, residues 1 to 22 (MIPVTELRYFADTQPAYRILKP) are cytoplasmic. Residues 23–47 (WWDVFTDYISIVMLMIAVFGGTLQV) traverse the membrane as a helical segment. Over 48–123 (TQDKMICLPC…YENRLHWFAK (76 aa)) the chain is Extracellular. Disulfide bonds link Cys-54–Cys-310, Cys-57–Cys-65, and Cys-113–Cys-295. Residues Asn-66 and Asn-83 are each glycosylated (N-linked (GlcNAc...) asparagine). Residues 124-142 (YFPYLVLLHTLIFLACSNF) form a helical membrane-spanning segment. Residues 143-264 (WFKFPRTSSK…EEGDIVYRLY (122 aa)) are Cytoplasmic-facing. Position 200 is a phosphothreonine (Thr-200). Ser-202 is subject to Phosphoserine. Thr-215 carries the post-translational modification Phosphothreonine. Ser-217 is subject to Phosphoserine. The chain crosses the membrane as a helical span at residues 265–286 (MRQTIIKVIKFALIICYTVYYV). Over 287–316 (HNIKFDVDCTVDIESLTGYRTYRCAHPLAT) the chain is Extracellular. Residues 317-341 (LFKILASFYISLVIFYGLICMYTLW) traverse the membrane as a helical segment. Residues 342-810 (WMLRRSLKKY…RLWRADKEQA (469 aa)) are Cytoplasmic-facing. 17 LRR repeats span residues 411-422 (WTLDKLRQRLTK), 423-445 (NAQDKLELHLFMLSGIPDTVFDL), 447-468 (ELEVLKLELIPDVTIPPSIAQL), 469-492 (TGLKELWLYHTAAKIEAPALAFLR), 493-515 (ENLRALHIKFTDIKEIPLWIYSL), 518-542 (LEELHLTGNLSAENNRYIVIDGLRE), 543-565 (LKRLKVLRLKSNLSKLPQVVTDV), 567-589 (VHLQKLSINNEGTKLIVLNSLKK), 590-613 (MVNLTELELIRCDLERIPHSIFSL), 614-637 (HNLQEIDLKDNNLKTIEEIISFQH), 639-661 (HRLTCLKLWYNHIAYIPIQIGNL), 662-684 (TNLERLYLNRNKIEKIPTQLFYC), 686-707 (KLRYLDLSHNNLTFLPADIGLL), 708-730 (QNLQNLAVTANRIEALPPELFQC), 732-753 (KLRALHLGNNVLQSLPSRVGEL), 754-776 (TNLTQIELRGNRLECLPVELGEC), and 778-801 (LLKRSGLVVEEDLFSTLPPEVKER). The Di-leucine motif motif lies at 706–707 (LL).

This sequence belongs to the LRRC8 family. As to quaternary structure, heterohexamer; oligomerizes with other LRRC8 proteins (LRRC8B, LRRC8C, LRRC8D and/or LRRC8E) to form a heterohexamer. Can form homohexamers in vitro, but these have lower conductance than heterohexamers. In vivo, the subunit composition may depend primarily on expression levels, and heterooligomeric channels containing various proportions of the different LRRC8 proteins may coexist. Interact with GRB2. Interacts with NOX4; this interaction prevents the ubiquitin-mediated degradation of LRRC8A. In terms of processing, N-glycosylated. In terms of tissue distribution, ubiquitously expressed. High levels detected in the bone marrow; lower levels found in peripheral blood cells. Highly expressed in pancreatic beta cells.

Its subcellular location is the cell membrane. It localises to the lysosome membrane. It catalyses the reaction chloride(in) = chloride(out). The catalysed reaction is iodide(out) = iodide(in). It carries out the reaction taurine(out) = taurine(in). The enzyme catalyses L-aspartate(out) = L-aspartate(in). It catalyses the reaction L-glutamate(out) = L-glutamate(in). The catalysed reaction is myo-inositol(out) = myo-inositol(in). It carries out the reaction 2',3'-cGAMP(out) = 2',3'-cGAMP(in). Its activity is regulated as follows. Inhibited by (4-[(2-butyl-6,7-dichloro-2-cyclopentyl-2,3-dihydro-1-oxo-1H-inden-5-yl)oxy]butanoic acid), which plugs the channel like a cork in a bottle by binding in the extracellular selectivity filter and sterically occluding ion conduction. Lipids may block conduction in closed heterohexameric channels. In terms of biological role, essential component of the volume-regulated anion channel (VRAC, also named VSOAC channel), an anion channel required to maintain a constant cell volume in response to extracellular or intracellular osmotic changes. The VRAC channel conducts iodide better than chloride and can also conduct organic osmolytes like taurine. Mediates efflux of amino acids, such as aspartate and glutamate, in response to osmotic stress. In complex with LRRC8C or LRRC8E, acts as a transporter of immunoreactive cyclic dinucleotide GMP-AMP (2'-3'-cGAMP), an immune messenger produced in response to DNA virus in the cytosol: mediates both import and export of 2'-3'-cGAMP, thereby promoting transfer of 2'-3'-cGAMP to bystander cells. In contrast, complexes containing LRRC8D inhibit transport of 2'-3'-cGAMP. Required for in vivo channel activity, together with at least one other family member (LRRC8B, LRRC8C, LRRC8D or LRRC8E); channel characteristics depend on the precise subunit composition. Can form functional channels by itself (in vitro). Involved in B-cell development: required for the pro-B cell to pre-B cell transition. Also required for T-cell development. Required for myoblast differentiation: VRAC activity promotes membrane hyperpolarization and regulates insulin-stimulated glucose metabolism and oxygen consumption. Also acts as a regulator of glucose-sensing in pancreatic beta cells: VRAC currents, generated in response to hypotonicity- or glucose-induced beta cell swelling, depolarize cells, thereby causing electrical excitation, leading to increase glucose sensitivity and insulin secretion. Also plays a role in lysosome homeostasis by forming functional lysosomal VRAC channels in response to low cytoplasmic ionic strength condition: lysosomal VRAC channels are necessary for the formation of large lysosome-derived vacuoles, which store and then expel excess water to maintain cytosolic water homeostasis. Acts as a key factor in NLRP3 inflammasome activation by modulating itaconate efflux and mitochondria function. The chain is Volume-regulated anion channel subunit LRRC8A from Mus musculus (Mouse).